We begin with the raw amino-acid sequence, 372 residues long: Fatty acid 2-hydroxylase (372 aa).

The 79-residue stretch at 8-86 folds into the Cytochrome b5 heme-binding domain; the sequence is AASFSPSEVQ…LEQYYVGELR (79 aa). The heme site is built by His-43 and His-69. 2 consecutive transmembrane segments (helical) span residues 168-188 and 213-233; these read VWYSVPIIWVPLVLYLSWSYY and SMFPGLFMLGTFLWSLIEYLI. In terms of domain architecture, Fatty acid hydroxylase spans 219-361; that stretch reads FMLGTFLWSL…TKLWDYCFHT (143 aa). His-234, His-239, His-257, His-260, and His-261 together coordinate Zn(2+). 2 helical membrane-spanning segments follow: residues 268–288 and 290–310; these read SRLVFPPVPASLVIGVFYLCM and LILPEAVGGTVFAGGLLGYVL. 5 residues coordinate Zn(2+): His-315, His-319, His-336, His-339, and His-340.

This sequence belongs to the sterol desaturase family. SCS7 subfamily. The cofactor is Zn(2+). In terms of tissue distribution, detected in differentiating cultured keratinocytes (at protein level). Detected in epidermis and cultured keratinocytes. Highly expressed in brain and colon. Detected at lower levels in testis, prostate, pancreas and kidney.

Its subcellular location is the endoplasmic reticulum membrane. The protein localises to the microsome membrane. It carries out the reaction a 1,2-saturated fatty acid + 2 Fe(II)-[cytochrome b5] + O2 + 2 H(+) = a (R)-2-hydroxy fatty acid + 2 Fe(III)-[cytochrome b5] + H2O. It catalyses the reaction hexadecanoate + 2 Fe(II)-[cytochrome b5] + O2 + 2 H(+) = (R)-2-hydroxyhexadecanoate + 2 Fe(III)-[cytochrome b5] + H2O. The catalysed reaction is octadecanoate + 2 Fe(II)-[cytochrome b5] + O2 + 2 H(+) = (R)-2-hydroxyoctadecanoate + 2 Fe(III)-[cytochrome b5] + H2O. The enzyme catalyses docosanoate + 2 Fe(II)-[cytochrome b5] + O2 + 2 H(+) = 2-hydroxydocosanoate + 2 Fe(III)-[cytochrome b5] + H2O. It carries out the reaction tetracosanoate + 2 Fe(II)-[cytochrome b5] + O2 + 2 H(+) = (R)-2-hydroxytetracosanoate + 2 Fe(III)-[cytochrome b5] + H2O. It participates in lipid metabolism; fatty acid metabolism. The protein operates within sphingolipid metabolism; galactosylceramide biosynthesis. Its function is as follows. Catalyzes the hydroxylation of free fatty acids at the C-2 position to produce 2-hydroxy fatty acids, which are building blocks of sphingolipids and glycosphingolipids common in neural tissue and epidermis. FA2H is stereospecific for the production of (R)-2-hydroxy fatty acids. Plays an essential role in the synthesis of galactosphingolipids of the myelin sheath. Responsible for the synthesis of sphingolipids and glycosphingolipids involved in the formation of epidermal lamellar bodies critical for skin permeability barrier. Participates in the synthesis of glycosphingolipids and a fraction of type II wax diesters in sebaceous gland, specifically regulating hair follicle homeostasis. Involved in the synthesis of sphingolipids of plasma membrane rafts, controlling lipid raft mobility and trafficking of raft-associated proteins. The sequence is that of Fatty acid 2-hydroxylase from Homo sapiens (Human).